A 293-amino-acid polypeptide reads, in one-letter code: Sodium-type flagellar protein MotY (293 aa).

The N-terminal stretch at 1-21 is a signal peptide; sequence MNKWLITSGVMLSLLSANSYA. The OmpA-like domain maps to 175–292; that stretch reads YSFEDIAFTI…RVVISLGRTQ (118 aa).

It localises to the cell membrane. May play the role of a stator in the sodium flagellar motor, stabilizing the force-generating unit through direct interaction with the cell wall. This Vibrio parahaemolyticus serotype O3:K6 (strain RIMD 2210633) protein is Sodium-type flagellar protein MotY.